We begin with the raw amino-acid sequence, 73 residues long: Large ribosomal subunit protein bL31 (73 aa).

It belongs to the bacterial ribosomal protein bL31 family. Type A subfamily. In terms of assembly, part of the 50S ribosomal subunit.

Its function is as follows. Binds the 23S rRNA. This is Large ribosomal subunit protein bL31 from Rhizobium rhizogenes (strain K84 / ATCC BAA-868) (Agrobacterium radiobacter).